Reading from the N-terminus, the 374-residue chain is Acid phosphatase-like protein XcAP-1 (374 aa).

A signal peptide spans Thr1–Ala17. Val25 serves as a coordination point for serotonin. Intrachain disulfides connect Cys144-Cys372, Cys165-Cys219, and Cys345-Cys349. Asp245, Asp249, Asn271, and Gln283 together coordinate serotonin.

This sequence belongs to the histidine acid phosphatase family.

The protein resides in the secreted. In terms of biological role, probably modulates blood feeding of fleas on vertebrate species by binding and sequestering different mediators involved in the host response. Binds biogenic amines: serotonin, adrenaline and noradrenaline. Binds leukotriene C4. Does not bind histamine, leukotriene B4, leukotriene D4, leukotriene E4, ADP, and stable analogs of thromboxane A2: U-46619 and cTXA2. The protein is Acid phosphatase-like protein XcAP-1 of Xenopsylla cheopis (Oriental rat flea).